A 419-amino-acid polypeptide reads, in one-letter code: MSQDNNFSQGPVPQSARKGVLALTFVMLGLTFFSASMWTGGTLGTGLSYHDFFLAVLIGNLLLGIYTSFLGYIGAKTGLTTHLLARFSFGVKGSWLPSLLLGGTQVGWFGVGVAMFAIPVGKATGLDINLLIAVSGLLMTVTVFFGISALTVLSLIAVPAIACLGGYSVWLAVNGMGGLDALKAVVPAQPLDFNVALALVVGSFISAGTLTADFVRFGRNAKLAVLVAMVAFFLGNSLMFIFGAAGAAALGMADISDVMIAQGLLLPAIVVLGLNIWTTNDNALYASGLGFANITGMSSKTLSVINGIIGTVCALWLYNNFVGWLTFLSAAIPPVGGVIIADYLMNRRRYEHFATTRMMSVNWVAILAVALGIAAGHWLPGIVPVNAVLGGALSYLILNPILNRKTTAAMTHVEANSVE.

At 1-19 the chain is on the cytoplasmic side; that stretch reads MSQDNNFSQGPVPQSARKG. A helical membrane pass occupies residues 20–39; that stretch reads VLALTFVMLGLTFFSASMWT. Topologically, residues 40-51 are periplasmic; it reads GGTLGTGLSYHD. A helical transmembrane segment spans residues 52–71; the sequence is FFLAVLIGNLLLGIYTSFLG. The Cytoplasmic portion of the chain corresponds to 72–100; it reads YIGAKTGLTTHLLARFSFGVKGSWLPSLL. A helical membrane pass occupies residues 101–120; that stretch reads LGGTQVGWFGVGVAMFAIPV. Residues 121–127 lie on the Periplasmic side of the membrane; sequence GKATGLD. Residues 128–147 traverse the membrane as a helical segment; that stretch reads INLLIAVSGLLMTVTVFFGI. Topologically, residues 148–152 are cytoplasmic; sequence SALTV. Residues 153-172 traverse the membrane as a helical segment; that stretch reads LSLIAVPAIACLGGYSVWLA. Residues 173-192 are Periplasmic-facing; sequence VNGMGGLDALKAVVPAQPLD. Residues 193 to 212 form a helical membrane-spanning segment; it reads FNVALALVVGSFISAGTLTA. Residues 213-221 are Cytoplasmic-facing; it reads DFVRFGRNA. A helical transmembrane segment spans residues 222–242; sequence KLAVLVAMVAFFLGNSLMFIF. At 243-257 the chain is on the periplasmic side; sequence GAAGAAALGMADISD. A helical membrane pass occupies residues 258–277; that stretch reads VMIAQGLLLPAIVVLGLNIW. Residues 278 to 300 are Cytoplasmic-facing; that stretch reads TTNDNALYASGLGFANITGMSSK. Residues 301-320 traverse the membrane as a helical segment; that stretch reads TLSVINGIIGTVCALWLYNN. F321 is a topological domain (periplasmic). Residues 322–341 traverse the membrane as a helical segment; it reads VGWLTFLSAAIPPVGGVIIA. The Cytoplasmic portion of the chain corresponds to 342–358; it reads DYLMNRRRYEHFATTRM. A helical membrane pass occupies residues 359–378; sequence MSVNWVAILAVALGIAAGHW. The Periplasmic portion of the chain corresponds to 379-380; it reads LP. Residues 381–400 traverse the membrane as a helical segment; the sequence is GIVPVNAVLGGALSYLILNP. At 401–419 the chain is on the cytoplasmic side; it reads ILNRKTTAAMTHVEANSVE.

It belongs to the purine-cytosine permease (2.A.39) family.

It is found in the cell inner membrane. In terms of biological role, required for cytosine transport into the cell. The protein is Cytosine permease (codB) of Escherichia coli O157:H7.